A 139-amino-acid polypeptide reads, in one-letter code: MFDMGFLELMLIGVVALLVLGPERLPTAARTVGLWVGKIKRTVSGMQREISAQLEAEELRQKLNEQQRKLDAGLGKVRDEVERHGDAPSSRGGQPPPSRTTPTAARSADDTDETPPSTAASRETPEPPAAPSAKDSNAP.

The helical transmembrane segment at 1–21 threads the bilayer; it reads MFDMGFLELMLIGVVALLVLG. The segment covering 66 to 86 has biased composition (basic and acidic residues); sequence QQRKLDAGLGKVRDEVERHGD. Residues 66–139 are disordered; sequence QQRKLDAGLG…APSAKDSNAP (74 aa).

This sequence belongs to the TatB family. As to quaternary structure, the Tat system comprises two distinct complexes: a TatABC complex, containing multiple copies of TatA, TatB and TatC subunits, and a separate TatA complex, containing only TatA subunits. Substrates initially bind to the TatABC complex, which probably triggers association of the separate TatA complex to form the active translocon.

The protein resides in the cell inner membrane. Functionally, part of the twin-arginine translocation (Tat) system that transports large folded proteins containing a characteristic twin-arginine motif in their signal peptide across membranes. Together with TatC, TatB is part of a receptor directly interacting with Tat signal peptides. TatB may form an oligomeric binding site that transiently accommodates folded Tat precursor proteins before their translocation. The chain is Sec-independent protein translocase protein TatB from Chromohalobacter salexigens (strain ATCC BAA-138 / DSM 3043 / CIP 106854 / NCIMB 13768 / 1H11).